Consider the following 395-residue polypeptide: GPI-anchor transamidase (395 aa).

An N-terminal signal peptide occupies residues 1–27; it reads MVDTCFLSRGLTTLAGLLLLPFGSLAA. Topologically, residues 28 to 368 are lumenal; that stretch reads SQIEDQAEQF…PKLKDWHPPG (341 aa). The Ca(2+) site is built by D79, I82, E118, and D120. The Proton donor role is filled by H164. The active-site Nucleophile; acyl-thioester intermediate is C206. Residues C206, S232, and S234 each coordinate a protein. Positions 231-236 are autoinhibitory loop; it reads DSLSHQ. Residues C275 and C280 are joined by a disulfide bond. The chain crosses the membrane as a helical span at residues 369 to 385; sequence GFILGLWALIIMVFFKT. At 386–395 the chain is on the cytoplasmic side; that stretch reads YGIKHMKFIF.

Belongs to the peptidase C13 family. Heteropentamer. Part of the GPI-anchor transamidase complex, consisting of PIGK, PIGT, PIGS, PIGU and GAA1. Interacts with GPAA1. Interacts with PIGT; this interaction, via a disulfide link, stabilizes the expression of GAA1 and PIGK and links them to PIGS. Post-translationally, the disulfide bond between PIGK/GPI8 and PIGT is important for normal enzyme activity.

The protein localises to the endoplasmic reticulum membrane. The protein operates within glycolipid biosynthesis; glycosylphosphatidylinositol-anchor biosynthesis. Its activity is regulated as follows. In the absence of proproteins substrates, exists in an inactive state with a disrupted catalytic site by an autoinhibitory loop. The binding of proprotein substrates, particularly the CSP region, to GPI-T triggers concerted conformational changes that alleviate the inhibition by the autoinhibitory loop. Meanwhile, proprotein residues near the omega- site induce the formation of a catalytic cleft for catalysis, following which the products are released and GPI-T reverts to the inactive state. Its function is as follows. Catalytic subunit of the glycosylphosphatidylinositol-anchor (GPI-anchor) transamidase (GPI-T) complex that catalyzes the formation of the linkage between a proprotein and a GPI-anchor and participates in GPI anchored protein biosynthesis. Recognizes diverse proproteins at a C-terminal signal peptide (CSP) region that lacks consensus sequence and replaces it with a GPI-anchor via a transamidation reaction. Transamidation catalysis reaction follows a two-phase mechanism. In the acyl-enzyme phase, the carbonyl group of the proproteins's omega-site undergoes a nucleophilic attack forming an enzyme-substrate thioester bond. Followed by a general acid catalysis that allows CSP releasing, regenerating the carbonyl, and forming the acyl-enzyme intermediate. In the GPI-anchor attachment phase, the amino group of the GPI-anchor's ethanolamine phosphate, the one on third mannose (EtNP3), mediates a nucleophilic attack on the carbonyl of the acyl-enzyme intermediate, replacing the CSP, allowing GPI-anchor attachment to the omega-residue, therefore forming the product and freeing the enzyme. The chain is GPI-anchor transamidase from Bos taurus (Bovine).